The primary structure comprises 82 residues: MLNINKEIAQIETELNELKKLRDEISERIEKLEIKLLKLKALAIPEEEFEEDYEEIIEDVKKSLDKKETVPAEEALKELGLL.

In terms of biological role, antitoxin component of a type II toxin-antitoxin (TA) system. Its cognate toxin is RelE1 (Potential). This Methanocaldococcus jannaschii (strain ATCC 43067 / DSM 2661 / JAL-1 / JCM 10045 / NBRC 100440) (Methanococcus jannaschii) protein is Putative antitoxin RelB1 (relB1).